Here is a 386-residue protein sequence, read N- to C-terminus: Succinate--CoA ligase [ADP-forming] subunit beta (386 aa).

In terms of domain architecture, ATP-grasp spans 9–244 (KDLLTSYAIP…PSQENVRDVL (236 aa)). ATP-binding positions include Lys46, 53-55 (GRG), Val102, and Glu107. Asn199 and Asp213 together coordinate Mg(2+). Residues Asn264 and 321–323 (GIM) each bind substrate.

The protein belongs to the succinate/malate CoA ligase beta subunit family. Heterotetramer of two alpha and two beta subunits. Requires Mg(2+) as cofactor.

It carries out the reaction succinate + ATP + CoA = succinyl-CoA + ADP + phosphate. It catalyses the reaction GTP + succinate + CoA = succinyl-CoA + GDP + phosphate. Its pathway is carbohydrate metabolism; tricarboxylic acid cycle; succinate from succinyl-CoA (ligase route): step 1/1. In terms of biological role, succinyl-CoA synthetase functions in the citric acid cycle (TCA), coupling the hydrolysis of succinyl-CoA to the synthesis of either ATP or GTP and thus represents the only step of substrate-level phosphorylation in the TCA. The beta subunit provides nucleotide specificity of the enzyme and binds the substrate succinate, while the binding sites for coenzyme A and phosphate are found in the alpha subunit. The protein is Succinate--CoA ligase [ADP-forming] subunit beta of Chlamydia abortus (strain DSM 27085 / S26/3) (Chlamydophila abortus).